Reading from the N-terminus, the 620-residue chain is Probable potassium transport system protein Kup 2 (620 aa).

Transmembrane regions (helical) follow at residues 10 to 30, 50 to 70, 102 to 122, 136 to 156, 168 to 188, 211 to 231, 246 to 266, 284 to 304, 336 to 356, 368 to 388, 393 to 413, and 415 to 435; these read LLVSAVGVVFGDIGTSPLYAL, VLSLVFWTVMLLVTVKYVIVI, MMLGVIAAALFYGDSMITPAI, PDLRPYVVPITAVVLTALFAI, FGPVMCLWFITLAVLGIVNVI, LMSFYALGSVVLAVTGGEALY, WFCLVLPALLLNYFGQGALLI, MVVPLVALATFAAVIASQAVI, IYVPFTNWTLYLAVMALVVGF, IAVTSTMMIDTILVSFVMALL, MALVITVVGTLLAVDIAFFSA, and IIKVAQGGWFPLFIGFISFTV.

It belongs to the HAK/KUP transporter (TC 2.A.72) family.

The protein localises to the cell inner membrane. It carries out the reaction K(+)(in) + H(+)(in) = K(+)(out) + H(+)(out). Its function is as follows. Transport of potassium into the cell. Likely operates as a K(+):H(+) symporter. The sequence is that of Probable potassium transport system protein Kup 2 from Rhodopseudomonas palustris (strain BisB5).